Reading from the N-terminus, the 411-residue chain is Argininosuccinate synthase (411 aa).

ATP contacts are provided by residues 10-18 (AYSGGLDTS) and Ala-37. The L-citrulline site is built by Tyr-89 and Ser-94. Gly-119 lines the ATP pocket. Positions 121, 125, and 126 each coordinate L-aspartate. Asn-125 is an L-citrulline binding site. L-citrulline contacts are provided by Arg-129, Ser-178, Ser-187, Glu-263, and Tyr-275.

Belongs to the argininosuccinate synthase family. Type 1 subfamily. In terms of assembly, homotetramer.

It localises to the cytoplasm. The enzyme catalyses L-citrulline + L-aspartate + ATP = 2-(N(omega)-L-arginino)succinate + AMP + diphosphate + H(+). The protein operates within amino-acid biosynthesis; L-arginine biosynthesis; L-arginine from L-ornithine and carbamoyl phosphate: step 2/3. This is Argininosuccinate synthase from Aeromonas salmonicida (strain A449).